The chain runs to 680 residues: HEAT repeat-containing protein 3 (680 aa).

Residues 1–11 (MGKSRTKRFKR) are compositionally biased toward basic residues. A disordered region spans residues 1 to 39 (MGKSRTKRFKRPQFSPTGDCQAEAAAAANGTGGEEDDGP). Ser-15 is subject to Phosphoserine. Positions 18-29 (GDCQAEAAAAAN) are enriched in low complexity. 2 HEAT repeats span residues 38-69 (GPAA…VQQR) and 74-110 (GLAR…SACG). Ser-144 carries the phosphoserine modification. A Phosphothreonine modification is found at Thr-340.

It belongs to the nuclear import and ribosome assembly adapter family. As to quaternary structure, component of a hexameric 5S RNP precursor complex, composed of 5S RNA, RRS1, RPF2/BXDC1, RPL5, RPL11 and HEATR3; this complex acts as a precursor for ribosome assembly.

In terms of biological role, plays a role in ribosome biogenesis and in nuclear import of the 60S ribosomal protein L5/large ribosomal subunit protein uL18 (RPL5). Required for proper erythrocyte maturation. The protein is HEAT repeat-containing protein 3 (HEATR3) of Homo sapiens (Human).